A 208-amino-acid chain; its full sequence is Small ribosomal subunit protein eS8 (208 aa).

This sequence belongs to the eukaryotic ribosomal protein eS8 family. Component of the small ribosomal subunit. Identified in a IGF2BP1-dependent mRNP granule complex containing untranslated mRNAs. Part of the small subunit (SSU) processome, composed of more than 70 proteins and the RNA chaperone small nucleolar RNA (snoRNA) U3.

Its subcellular location is the cytoplasm. The protein localises to the membrane. It is found in the nucleus. The protein resides in the nucleolus. Its function is as follows. Component of the small ribosomal subunit. The ribosome is a large ribonucleoprotein complex responsible for the synthesis of proteins in the cell. Part of the small subunit (SSU) processome, first precursor of the small eukaryotic ribosomal subunit. During the assembly of the SSU processome in the nucleolus, many ribosome biogenesis factors, an RNA chaperone and ribosomal proteins associate with the nascent pre-rRNA and work in concert to generate RNA folding, modifications, rearrangements and cleavage as well as targeted degradation of pre-ribosomal RNA by the RNA exosome. The chain is Small ribosomal subunit protein eS8 (rps-8) from Caenorhabditis elegans.